Reading from the N-terminus, the 341-residue chain is L-threonine 3-dehydrogenase (341 aa).

C38 provides a ligand contact to Zn(2+). Catalysis depends on charge relay system residues T40 and H43. Residues H63, E64, C93, C96, C99, and C107 each coordinate Zn(2+). NAD(+) is bound by residues I175, D195, R200, L262–I264, and I286–Y287.

It belongs to the zinc-containing alcohol dehydrogenase family. Homotetramer. Zn(2+) serves as cofactor.

It localises to the cytoplasm. It carries out the reaction L-threonine + NAD(+) = (2S)-2-amino-3-oxobutanoate + NADH + H(+). Its pathway is amino-acid degradation; L-threonine degradation via oxydo-reductase pathway; glycine from L-threonine: step 1/2. Its function is as follows. Catalyzes the NAD(+)-dependent oxidation of L-threonine to 2-amino-3-ketobutyrate. The sequence is that of L-threonine 3-dehydrogenase from Idiomarina loihiensis (strain ATCC BAA-735 / DSM 15497 / L2-TR).